The primary structure comprises 239 residues: C-8 sterol isomerase erg2 (239 aa).

N-linked (GlcNAc...) asparagine glycosylation occurs at asparagine 11. Residues 27–47 (KFGFLAVFVAIFAALYSYLDA) traverse the membrane as a helical segment. Residue asparagine 73 is glycosylated (N-linked (GlcNAc...) asparagine).

This sequence belongs to the ERG2 family.

The protein localises to the endoplasmic reticulum membrane. It catalyses the reaction fecosterol = episterol. Its pathway is steroid metabolism; ergosterol biosynthesis. Functionally, C-8 sterol isomerase; part of the third module of ergosterol biosynthesis pathway that includes the late steps of the pathway. Erg2 catalyzes the reaction which results in unsaturation at C-7 in the B ring of sterols and thus converts fecosterol to episterol. The third module or late pathway involves the ergosterol synthesis itself through consecutive reactions that mainly occur in the endoplasmic reticulum (ER) membrane. Firstly, the squalene synthase erg9 catalyzes the condensation of 2 farnesyl pyrophosphate moieties to form squalene, which is the precursor of all steroids. Squalene synthase is crucial for balancing the incorporation of farnesyl diphosphate (FPP) into sterol and nonsterol isoprene synthesis. Secondly, squalene is converted into lanosterol by the consecutive action of the squalene epoxidase erg1 and the lanosterol synthase erg7. Then, the delta(24)-sterol C-methyltransferase erg6 methylates lanosterol at C-24 to produce eburicol. Eburicol is the substrate of the sterol 14-alpha demethylase encoded by cyp51A and cyp51B, to yield 4,4,24-trimethyl ergosta-8,14,24(28)-trienol. The C-14 reductase erg24 then reduces the C14=C15 double bond which leads to 4,4-dimethylfecosterol. A sequence of further demethylations at C-4, involving the C-4 demethylation complex containing the C-4 methylsterol oxidases erg25A or erg25B, the sterol-4-alpha-carboxylate 3-dehydrogenase erg26 and the 3-keto-steroid reductase erg27, leads to the production of fecosterol via 4-methylfecosterol. The C-8 sterol isomerase erg2 then catalyzes the reaction which results in unsaturation at C-7 in the B ring of sterols and thus converts fecosterol to episterol. The sterol-C5-desaturase erg3B then catalyzes the introduction of a C-5 double bond in the B ring to produce 5-dehydroepisterol. The 2 other sterol-C5-desaturases, erg3A and erg3C, seem to be less important in ergosterol biosynthesis. The C-22 sterol desaturase erg5 further converts 5-dehydroepisterol into ergosta-5,7,22,24(28)-tetraen-3beta-ol by forming the C-22(23) double bond in the sterol side chain. Finally, ergosta-5,7,22,24(28)-tetraen-3beta-ol is substrate of the C-24(28) sterol reductases erg4A and erg4B to produce ergosterol. Possible alternative sterol biosynthetic pathways might exist from fecosterol to ergosterol, depending on the activities of the erg3 isoforms. The polypeptide is C-8 sterol isomerase erg2 (Aspergillus fumigatus (strain ATCC MYA-4609 / CBS 101355 / FGSC A1100 / Af293) (Neosartorya fumigata)).